The primary structure comprises 583 residues: R-linalool synthase QH5, chloroplastic (583 aa).

The transit peptide at 1–40 (MASISLFPYSILKQTSPLARGTAYNRIYSTKTTGITVDVA) directs the protein to the chloroplast. Positions 298, 335, 339, 476, and 479 each coordinate (2E)-geranyl diphosphate. Residues D335 and D339 each coordinate Mg(2+). Residues 335-339 (DDVYD) carry the DDXXD motif motif. Mg(2+) contacts are provided by D479, T483, and E487. Residue D492 coordinates K(+).

This sequence belongs to the terpene synthase family. Tpsb subfamily. Mg(2+) serves as cofactor. Requires Mn(2+) as cofactor. K(+) is required as a cofactor. As to expression, expressed in every aerial organ except for the stem stele of mature plants. Not detected in roots.

It localises to the plastid. The protein resides in the chloroplast. The catalysed reaction is (2E)-geranyl diphosphate + H2O = (R)-linalool + diphosphate. It functions in the pathway secondary metabolite biosynthesis; terpenoid biosynthesis. Its function is as follows. Monoterpene synthase that catalyzes the formation of (3R)-linalool from geranyl diphosphate, but not from isopentenyl diphosphate, dimethylallyl diphosphate, chrysanthemyl diphosphate, farnesyl diphosphate, (+)-copalyl diphosphate or geranylgeranyl diphosphate. The sequence is that of R-linalool synthase QH5, chloroplastic from Artemisia annua (Sweet wormwood).